The primary structure comprises 369 residues: MRDRVTAARRVVVKIGSSSLTTATGGLDDGRVDALVDTLGGLAAQGREVVLVSSGAIAAGLAPLGLTRRPRDLATQQAAASVGQGLLIGRYAAAFARHHLTVGQVLLTVDDMTRRAHYRNAYRTLRKLLDLRAVPIVNENDTVATEEIRFGDNDRLAALVAALVDTDLLVLLSDVDALWTGDPTRPGSTPIAEVHDARDLSGVAIGGAGRSGVGTGGMVTKVEAARIATGFGIPVVLTSADLAAEALDGKPVGTLFHPSPRRPAARLFWLAHATSPRGRLHLDPGAVEAVVDRRKSLLAAGISAVQGAFTAGDPVDLVDTEGVPVARGLVNYDAVELPGLLGRSTSELATALGPAYEREVVHCDDLVLL.

Lys-14 is a binding site for ATP. 3 residues coordinate substrate: Ser-54, Asp-141, and Asn-153. Residues 173 to 174 and 215 to 221 each bind ATP; these read SD and TGGMVTK. In terms of domain architecture, PUA spans 277–355; the sequence is RGRLHLDPGA…SELATALGPA (79 aa).

The protein belongs to the glutamate 5-kinase family.

It is found in the cytoplasm. It carries out the reaction L-glutamate + ATP = L-glutamyl 5-phosphate + ADP. It participates in amino-acid biosynthesis; L-proline biosynthesis; L-glutamate 5-semialdehyde from L-glutamate: step 1/2. In terms of biological role, catalyzes the transfer of a phosphate group to glutamate to form L-glutamate 5-phosphate. This is Glutamate 5-kinase from Salinispora arenicola (strain CNS-205).